Here is a 117-residue protein sequence, read N- to C-terminus: Replication initiation control protein YabA (117 aa).

The disordered stretch occupies residues Asn-45–Asp-81. 2 stretches are compositionally biased toward basic and acidic residues: residues Gln-46–Glu-62 and Gly-72–Asp-81. Zn(2+)-binding residues include His-92, Cys-94, Cys-107, and Cys-110.

Belongs to the YabA family. Homotetramer. Interacts with both DnaA and DnaN, acting as a bridge between these two proteins. The cofactor is Zn(2+).

The protein localises to the cytoplasm. The protein resides in the nucleoid. Its function is as follows. Involved in control of chromosome replication initiation. Inhibits the cooperative binding of DnaA to the oriC region, thus negatively regulating initiation of chromosome replication. Inhibits the ability of DnaA-ATP to form a helix on DNA; does not disassemble preformed DnaA-DNA helices. Decreases the residence time of DnaA on the chromosome at its binding sites (oriC, replication forks and promoter-binding sites). Tethers DnaA to the replication machinery via the DNA polymerase beta sliding clamp subunit (dnaN). Associates with oriC and other DnaA targets on the chromosome in a DnaA-dependent manner. This chain is Replication initiation control protein YabA, found in Bacillus pumilus (strain SAFR-032).